We begin with the raw amino-acid sequence, 432 residues long: Tyrosine--tRNA ligase (432 aa).

The short motif at 46-55 (PTRPDLHLGH) is the 'HIGH' region element. Positions 232-236 (KMSKS) match the 'KMSKS' region motif. ATP is bound at residue Lys-235. Residues 369–430 (IWVARLFTLA…GKDRFVRVRL (62 aa)) enclose the S4 RNA-binding domain.

Belongs to the class-I aminoacyl-tRNA synthetase family. TyrS type 2 subfamily. As to quaternary structure, homodimer.

The protein localises to the cytoplasm. It catalyses the reaction tRNA(Tyr) + L-tyrosine + ATP = L-tyrosyl-tRNA(Tyr) + AMP + diphosphate + H(+). Functionally, catalyzes the attachment of tyrosine to tRNA(Tyr) in a two-step reaction: tyrosine is first activated by ATP to form Tyr-AMP and then transferred to the acceptor end of tRNA(Tyr). The sequence is that of Tyrosine--tRNA ligase from Thermus thermophilus (strain ATCC BAA-163 / DSM 7039 / HB27).